A 217-amino-acid chain; its full sequence is Ras-related protein Rab-19 (217 aa).

GTP is bound by residues S26, V28, G29, K30, T31, C32, Y42, E44, and T49. T31 is a binding site for Mg(2+). Residues 39-54 (SGVYMEAQQNTIGVDF) carry the Switch 1 motif. Positions 49 and 72 each coordinate Mg(2+). The Switch 2 motif lies at 74-89 (AGQERFRTITQSYYRS). GTP contacts are provided by G75, N130, K131, D133, S161, A162, and K163. 2 S-geranylgeranyl cysteine lipidation sites follow: C215 and C217. C217 bears the Cysteine methyl ester mark.

This sequence belongs to the small GTPase superfamily. Rab family. Mg(2+) is required as a cofactor.

It localises to the cell membrane. The enzyme catalyses GTP + H2O = GDP + phosphate + H(+). Its activity is regulated as follows. Regulated by guanine nucleotide exchange factors (GEFs) which promote the exchange of bound GDP for free GTP. Regulated by GTPase activating proteins (GAPs) which increase the GTP hydrolysis activity. Inhibited by GDP dissociation inhibitors (GDIs). Functionally, the small GTPases Rab are key regulators of intracellular membrane trafficking, from the formation of transport vesicles to their fusion with membranes. Rabs cycle between an inactive GDP-bound form and an active GTP-bound form that is able to recruit to membranes different set of downstream effectors directly responsible for vesicle formation, movement, tethering and fusion. This Bos taurus (Bovine) protein is Ras-related protein Rab-19 (RAB19).